Reading from the N-terminus, the 98-residue chain is DNA-binding protein Fis (98 aa).

Residues 74–93 (QTRAATMLGINRGTLRKKLK) constitute a DNA-binding region (H-T-H motif).

The protein belongs to the transcriptional regulatory Fis family. As to quaternary structure, homodimer.

Activates ribosomal RNA transcription. Plays a direct role in upstream activation of rRNA promoters. The protein is DNA-binding protein Fis of Histophilus somni (strain 2336) (Haemophilus somnus).